Reading from the N-terminus, the 98-residue chain is Large ribosomal subunit protein uL23 (98 aa).

It belongs to the universal ribosomal protein uL23 family. As to quaternary structure, part of the 50S ribosomal subunit. Contacts protein L29, and trigger factor when it is bound to the ribosome.

In terms of biological role, one of the early assembly proteins it binds 23S rRNA. One of the proteins that surrounds the polypeptide exit tunnel on the outside of the ribosome. Forms the main docking site for trigger factor binding to the ribosome. The protein is Large ribosomal subunit protein uL23 of Bordetella bronchiseptica (strain ATCC BAA-588 / NCTC 13252 / RB50) (Alcaligenes bronchisepticus).